The following is a 164-amino-acid chain: Ribosome maturation factor RimP (164 aa).

Belongs to the RimP family.

The protein localises to the cytoplasm. Functionally, required for maturation of 30S ribosomal subunits. In Thermodesulfovibrio yellowstonii (strain ATCC 51303 / DSM 11347 / YP87), this protein is Ribosome maturation factor RimP.